Here is a 225-residue protein sequence, read N- to C-terminus: Lipoprotein-releasing system ATP-binding protein LolD (225 aa).

The ABC transporter domain maps to 5-225; it reads LEVMDLTKGY…RLVDGRVVAD (221 aa). 41 to 48 contacts ATP; that stretch reads GASGTGKS.

It belongs to the ABC transporter superfamily. Lipoprotein translocase (TC 3.A.1.125) family. The complex is composed of two ATP-binding proteins (LolD) and two transmembrane proteins (LolC and LolE).

The protein localises to the cell inner membrane. In terms of biological role, part of the ABC transporter complex LolCDE involved in the translocation of mature outer membrane-directed lipoproteins, from the inner membrane to the periplasmic chaperone, LolA. Responsible for the formation of the LolA-lipoprotein complex in an ATP-dependent manner. This is Lipoprotein-releasing system ATP-binding protein LolD from Geobacter metallireducens (strain ATCC 53774 / DSM 7210 / GS-15).